The chain runs to 556 residues: Formate--tetrahydrofolate ligase 1 (556 aa).

Thr65 to Ser72 is a binding site for ATP.

Belongs to the formate--tetrahydrofolate ligase family.

The catalysed reaction is (6S)-5,6,7,8-tetrahydrofolate + formate + ATP = (6R)-10-formyltetrahydrofolate + ADP + phosphate. Its pathway is one-carbon metabolism; tetrahydrofolate interconversion. This chain is Formate--tetrahydrofolate ligase 1, found in Streptococcus pyogenes serotype M28 (strain MGAS6180).